The following is a 236-amino-acid chain: MSSADFNFGDFTTTYTSPTIPAYPDTLGQLQPIQPNPQAAYPPVSQHHASHHVQHPHQPGYVLSNPPQLSGNKRKASDAMSVPPTPGARVMSFEEASRLAAEEDKRKRNTAASARFRIKKKQREQALEKSAKEMSEKVTQLEGRIQALETENKWLKGLVTEKHGSKEDILKLLREFSAHAAKVSKDAAAAAADKAEAAADKADAERAREESSFCVSTSSPSSDESVDTDNKKRRKD.

The disordered stretch occupies residues T26 to R89. Residues G28–P37 show a composition bias toward polar residues. Residues L99–K162 enclose the bZIP domain. The tract at residues K105–K137 is basic motif. The interval L141–L155 is leucine-zipper. Positions A189 to D236 are disordered. Basic and acidic residues predominate over residues D193 to S211. Positions S212–D223 are enriched in low complexity.

This sequence belongs to the bZIP family. GCN4 subfamily. Binds DNA as a dimer.

It localises to the nucleus. Its function is as follows. Turns on the expression of structural genes which encode sulfur-catabolic enzymes. Binds to sequence elements upstream of these genes. This chain is Regulatory protein cys-3 (cys-3), found in Neurospora crassa (strain ATCC 24698 / 74-OR23-1A / CBS 708.71 / DSM 1257 / FGSC 987).